The primary structure comprises 440 residues: Proton extrusion protein PxcA (440 aa).

The next 4 helical transmembrane spans lie at 222–242 (FVLT…TFFL), 316–336 (NAIA…LVLV), 352–374 (IVYG…MFVG), and 400–420 (FNFL…KYWI).

This sequence belongs to the CemA family.

It is found in the cell inner membrane. In terms of biological role, required for H(+) efflux immediately after light irradiation to form a rapid H(+) concentration gradient across the thylakoid membranes. Together with PxcL, contributes to transient H(+) uptake following dark to light transition. Involved in light-induced Na(+)-dependent proton extrusion. Also seems to be involved in CO(2) transport. The polypeptide is Proton extrusion protein PxcA (Synechocystis sp. (strain ATCC 27184 / PCC 6803 / Kazusa)).